We begin with the raw amino-acid sequence, 436 residues long: Glutamyl-tRNA reductase (436 aa).

Substrate contacts are provided by residues 49-52 (TCNR), S109, 114-116 (EGQ), and Q120. C50 serves as the catalytic Nucleophile. 198–203 (GAGRMS) contacts NADP(+).

Belongs to the glutamyl-tRNA reductase family. In terms of assembly, homodimer.

The enzyme catalyses (S)-4-amino-5-oxopentanoate + tRNA(Glu) + NADP(+) = L-glutamyl-tRNA(Glu) + NADPH + H(+). It participates in porphyrin-containing compound metabolism; protoporphyrin-IX biosynthesis; 5-aminolevulinate from L-glutamyl-tRNA(Glu): step 1/2. Its pathway is porphyrin-containing compound metabolism; chlorophyll biosynthesis. Functionally, catalyzes the NADPH-dependent reduction of glutamyl-tRNA(Glu) to glutamate 1-semialdehyde (GSA). The protein is Glutamyl-tRNA reductase of Prochlorococcus marinus (strain MIT 9313).